The following is a 757-amino-acid chain: Vitamin K-dependent gamma-carboxylase (757 aa).

N-acetylalanine is present on A2. Residues 2-60 are Cytoplasmic-facing; it reads AVHRGSALVAPASDKVQKNKSAQTSGLKQGSRMEKILGFEWTDLSSWQSVVTLLNKPTD. The chain crosses the membrane as a helical span at residues 61–81; it reads PANLAVFRFLFAFLMLLDIPQ. The Lumenal segment spans residues 82–113; it reads ERGLSSLDRKYLDGLDVCRFPLLDALRPLPLD. C99 and C450 form a disulfide bridge. A helical membrane pass occupies residues 114–134; it reads WMYLVYTIMFLGALGMMLGLC. The Cytoplasmic segment spans residues 135-136; sequence YR. A helical transmembrane segment spans residues 137–157; the sequence is LSCVLFLLPYWYVFLLDKTSW. At 158–292 the chain is on the lumenal side; it reads NNHSYLYGLL…VSYFHCMNSQ (135 aa). The helical transmembrane segment at 293–313 threads the bilayer; that stretch reads LFSIGMFPYVMLASSPLFCSA. Topologically, residues 314–361 are cytoplasmic; sequence EWPRKLVARCPKRLQELLPTKAAPRPSASCVYKRSRGKAGPKPGLRHQ. Residues 362–382 form a helical membrane-spanning segment; that stretch reads LGAIFTLLYLLEQLFLPYSHF. Residues 383–757 are Lumenal-facing; that stretch reads LTQGYNNWTN…PDSEHVHSEF (375 aa). A disordered region spans residues 729 to 757; the sequence is EPVDESSASNTDSSNHPSEPDSEHVHSEF. Polar residues predominate over residues 734–745; that stretch reads SSASNTDSSNHP. Over residues 746-757 the composition is skewed to basic and acidic residues; it reads SEPDSEHVHSEF.

The protein belongs to the vitamin K-dependent gamma-carboxylase family. Monomer. May interact with CALU.

Its subcellular location is the endoplasmic reticulum membrane. It carries out the reaction 4-carboxy-L-glutamyl-[protein] + 2,3-epoxyphylloquinone + H2O + H(+) = phylloquinol + L-glutamyl-[protein] + CO2 + O2. Its function is as follows. Mediates the vitamin K-dependent carboxylation of glutamate residues to calcium-binding gamma-carboxyglutamate (Gla) residues with the concomitant conversion of the reduced hydroquinone form of vitamin K to vitamin K epoxide. Catalyzes gamma-carboxylation of various proteins, such as blood coagulation factors (F2, F7, F9 and F10), osteocalcin (bglap and bglap2) or matrix Gla protein (MGP). This chain is Vitamin K-dependent gamma-carboxylase (Ggcx), found in Mus musculus (Mouse).